The primary structure comprises 478 residues: Transcript termination protein A18 (478 aa).

The 157-residue stretch at 98-254 (KVELKRPMYV…NDVINVSNSS (157 aa)) folds into the Helicase ATP-binding domain. Residue 111–118 (LACGFGKT) participates in ATP binding. Residues 204–207 (DESH) carry the DESH box motif. Residues 307–454 (ILDTIIYDFE…IITLAIEKLG (148 aa)) enclose the Helicase C-terminal domain.

Belongs to the helicase family. Poxviruses subfamily. Interacts with G2. Might be part of a transcription complex composed at least of G2, A18, and H5.

Its subcellular location is the virion. Functionally, DNA helicase which seems to act as a postreplicative transcription termination factor. Involved in ATP-dependent release of nascent RNA. Forms a stable complex with single-stranded DNA, and to a lesser extent RNA. The chain is Transcript termination protein A18 from Erythrocebus patas (Red guenon).